The following is a 299-amino-acid chain: Oxygen-dependent coproporphyrinogen-III oxidase (299 aa).

Residue Ser92 participates in substrate binding. Residues His96 and His106 each contribute to the Mn(2+) site. His106 acts as the Proton donor in catalysis. 108–110 provides a ligand contact to substrate; that stretch reads NVR. The Mn(2+) site is built by His145 and His175. Positions 240–275 are important for dimerization; the sequence is YVEFNLVWDRGTLFGLQTGGRTESILMSMPPLVRWE. 258–260 lines the substrate pocket; the sequence is GGR.

Belongs to the aerobic coproporphyrinogen-III oxidase family. Homodimer. Requires Mn(2+) as cofactor.

The protein localises to the cytoplasm. The catalysed reaction is coproporphyrinogen III + O2 + 2 H(+) = protoporphyrinogen IX + 2 CO2 + 2 H2O. The protein operates within porphyrin-containing compound metabolism; protoporphyrin-IX biosynthesis; protoporphyrinogen-IX from coproporphyrinogen-III (O2 route): step 1/1. Its function is as follows. Involved in the heme biosynthesis. Catalyzes the aerobic oxidative decarboxylation of propionate groups of rings A and B of coproporphyrinogen-III to yield the vinyl groups in protoporphyrinogen-IX. The polypeptide is Oxygen-dependent coproporphyrinogen-III oxidase (Escherichia coli O157:H7).